The following is a 689-amino-acid chain: Glycine--tRNA ligase beta subunit (689 aa).

Belongs to the class-II aminoacyl-tRNA synthetase family. As to quaternary structure, tetramer of two alpha and two beta subunits.

The protein localises to the cytoplasm. It carries out the reaction tRNA(Gly) + glycine + ATP = glycyl-tRNA(Gly) + AMP + diphosphate. In Escherichia coli O139:H28 (strain E24377A / ETEC), this protein is Glycine--tRNA ligase beta subunit.